The chain runs to 274 residues: Large ribosomal subunit protein uL2 (274 aa).

Disordered stretches follow at residues 40 to 59 (SGGR…GGHK) and 223 to 274 (VAMN…RRSR). Basic residues-rich tracts occupy residues 49 to 59 (VTRRHQGGGHK) and 256 to 274 (YRTR…RRSR).

It belongs to the universal ribosomal protein uL2 family. Part of the 50S ribosomal subunit. Forms a bridge to the 30S subunit in the 70S ribosome.

In terms of biological role, one of the primary rRNA binding proteins. Required for association of the 30S and 50S subunits to form the 70S ribosome, for tRNA binding and peptide bond formation. It has been suggested to have peptidyltransferase activity; this is somewhat controversial. Makes several contacts with the 16S rRNA in the 70S ribosome. This is Large ribosomal subunit protein uL2 from Acidithiobacillus ferrooxidans (strain ATCC 23270 / DSM 14882 / CIP 104768 / NCIMB 8455) (Ferrobacillus ferrooxidans (strain ATCC 23270)).